A 406-amino-acid polypeptide reads, in one-letter code: 2,3-diketo-5-methylthiopentyl-1-phosphate enolase (406 aa).

Lysine 94 functions as the Proton acceptor in the catalytic mechanism. Substrate is bound by residues lysine 143, 169–172 (KDDE), histidine 260, glycine 332, and 354–355 (GG). 3 residues coordinate Mg(2+): lysine 169, aspartate 171, and glutamate 172. Lysine 169 carries the post-translational modification N6-carboxylysine.

The protein belongs to the RuBisCO large chain family. Type IV subfamily. In terms of assembly, homodimer. Mg(2+) is required as a cofactor.

It carries out the reaction 5-methylsulfanyl-2,3-dioxopentyl phosphate = 2-hydroxy-5-methylsulfanyl-3-oxopent-1-enyl phosphate. Its pathway is amino-acid biosynthesis; L-methionine biosynthesis via salvage pathway; L-methionine from S-methyl-5-thio-alpha-D-ribose 1-phosphate: step 3/6. Its function is as follows. Catalyzes the enolization of 2,3-diketo-5-methylthiopentyl-1-phosphate (DK-MTP-1-P) into 2-hydroxy-3-keto-5-methylthiopentenyl-1-phosphate (HK-MTPenyl-1-P). The chain is 2,3-diketo-5-methylthiopentyl-1-phosphate enolase from Bacillus pumilus (strain SAFR-032).